The following is a 456-amino-acid chain: Dolichyl-diphosphooligosaccharide--protein glycosyltransferase 48 kDa subunit (456 aa).

The N-terminal stretch at 1-42 (MGYFRCARAGSFGRRRKMEPSTAARAWALFWLLLPLLGAVCA) is a signal peptide. Residues 43–427 (SGPRTLVLLD…YERFIPSAYP (385 aa)) are Lumenal-facing. Residues 428 to 447 (YYASAFSMMLGLFIFSIVFL) form a helical membrane-spanning segment. The Cytoplasmic portion of the chain corresponds to 448-456 (HMKEKEKSD).

It belongs to the DDOST 48 kDa subunit family. As to quaternary structure, component of the oligosaccharyltransferase (OST) complex. OST exists in two different complex forms which contain common core subunits RPN1, RPN2, OST48, OST4, DAD1 and TMEM258, either STT3A or STT3B as catalytic subunits, and form-specific accessory subunits. STT3A complex assembly occurs through the formation of 3 subcomplexes. Subcomplex 1 contains RPN1 and TMEM258, subcomplex 2 contains the STT3A-specific subunits STT3A, DC2/OSTC, and KCP2 as well as the core subunit OST4, and subcomplex 3 contains RPN2, DAD1, and OST48. The STT3A complex can form stable complexes with the Sec61 complex or with both the Sec61 and TRAP complexes. Interacts with SMIM22.

Its subcellular location is the endoplasmic reticulum membrane. Its pathway is protein modification; protein glycosylation. Subunit of the oligosaccharyl transferase (OST) complex that catalyzes the initial transfer of a defined glycan (Glc(3)Man(9)GlcNAc(2) in eukaryotes) from the lipid carrier dolichol-pyrophosphate to an asparagine residue within an Asn-X-Ser/Thr consensus motif in nascent polypeptide chains, the first step in protein N-glycosylation. N-glycosylation occurs cotranslationally and the complex associates with the Sec61 complex at the channel-forming translocon complex that mediates protein translocation across the endoplasmic reticulum (ER). All subunits are required for a maximal enzyme activity. Required for the assembly of both SST3A- and SS3B-containing OST complexes. The sequence is that of Dolichyl-diphosphooligosaccharide--protein glycosyltransferase 48 kDa subunit from Homo sapiens (Human).